A 63-amino-acid polypeptide reads, in one-letter code: Large ribosomal subunit protein uL29 (63 aa).

The protein belongs to the universal ribosomal protein uL29 family.

This chain is Large ribosomal subunit protein uL29, found in Shigella dysenteriae serotype 1 (strain Sd197).